The sequence spans 1025 residues: Protein mono-ADP-ribosyltransferase PARP10 (1025 aa).

Thr-101 carries the phosphothreonine modification. At Glu-106 the chain carries ADP-ribosyl glutamic acid. At Lys-140 the chain carries N6-(ADP-ribosyl)lysine. The interval 318 to 346 is disordered; that stretch reads GIMTTGSGQEPGQSGTSLRTGPMGSLGQA. The segment covering 321-336 has biased composition (polar residues); sequence TTGSGQEPGQSGTSLR. 3 positions are modified to phosphoserine: Ser-378, Ser-423, and Ser-431. 2 disordered regions span residues 569–589 and 617–644; these read VLPG…DQED and LEEE…APST. Acidic residues predominate over residues 617–639; the sequence is LEEEGPQEQPEEEVTPGHEEEEP. 2 short sequence motifs (ubiquitin-interacting) span residues 650–667 and 673–690; these read LEEE…LEPQ and QEEA…LLEQ. Ser-663 carries the post-translational modification Phosphoserine. The segment at 700 to 907 is myc binding; that stretch reads DGGTDGKAQL…CAHGFNRSFC (208 aa). The 220-residue stretch at 806-1025 folds into the PARP catalytic domain; that stretch reads PTLAGQTLKG…SGLPGRSPDT (220 aa). Positions 831-838 match the PIP-box motif; it reads QEVVRAFY. Glu-882 bears the ADP-ribosyl glutamic acid mark. Residue Lys-916 is modified to N6-(ADP-ribosyl)lysine. At Lys-916 the chain carries N6-acetyllysine. Positions 1006 to 1025 are disordered; the sequence is HVPRASPDDPSGLPGRSPDT. Phosphoserine is present on Ser-1011.

The protein belongs to the ARTD/PARP family. Interacts with MYC. Interacts with PARP14. Interacts (via-PIP box and ubiquitin-interacting motifs) with PCNA. Stimulated through its phosphorylation by CDK2. Acquires CDK-dependent phosphorylation through late-G1 to S phase, and from prometaphase to cytokinesis in the nucleolar organizing regions. Phosphorylation is suppressed in growth-arrested cells. In terms of processing, auto-mono-ADP-ribosylated on glutamate and lysine residues. In terms of tissue distribution, highly expressed in spleen and thymus. Intermediate levels in liver, kidney, pancreas, prostate, testis, ovary, intestine, and leukocytes. Low expression in heart, brain, placenta, lung, skeletal muscle, and colon.

The protein localises to the nucleus. It is found in the nucleolus. The protein resides in the cytoplasm. It catalyses the reaction L-lysyl-[protein] + NAD(+) = N(6)-(ADP-D-ribosyl)-L-lysyl-[protein] + nicotinamide + H(+). It carries out the reaction L-aspartyl-[protein] + NAD(+) = 4-O-(ADP-D-ribosyl)-L-aspartyl-[protein] + nicotinamide. The enzyme catalyses L-glutamyl-[protein] + NAD(+) = 5-O-(ADP-D-ribosyl)-L-glutamyl-[protein] + nicotinamide. ADP-ribosyltransferase that mediates mono-ADP-ribosylation of glutamate and aspartate residues on target proteins. In contrast to PARP1 and PARP2, it is not able to mediate poly-ADP-ribosylation. Catalyzes mono-ADP-ribosylation of GSK3B, leading to negatively regulate GSK3B kinase activity. Involved in translesion DNA synthesis in response to DNA damage via its interaction with PCNA. In Homo sapiens (Human), this protein is Protein mono-ADP-ribosyltransferase PARP10.